We begin with the raw amino-acid sequence, 486 residues long: MAKITQTMISQLLAAVGGSSNVSKCGNCMTRLRLTLANNGVADQAVIKQIPGVMGVVESDEQFQIILGPGKAQQAAELMNKLIESVINGDVQEQAIASDTNDLSSVAAEQKKQMKSKQTSAVQRFLSKFATIFTPLIPGFIAAGLLLGFATLLEQMFVLEQTPSQFMLDLIAYMKVFGKGLFAFLSILIGYNAQQAFGGSGVNGAILASLFVLGYNPDATSGIYSGMSEFFGYTIDPRGNIIGVLLAAIIGAQVERKVREYMPDDLDMILTSVVTLLIMGVITFVVIMPIGGELFKGMSWLFLNLNDNPLGAAILAGLFLISVVFGIHQGFVPVYFALMEAQGFNSLFPILAMAGGGQVGASLALYFKAKKDAVLRTQVKGAIIPGILGIGEPLIYGVTLPRVKPFVTACIGGAAGGFFIGLVSYLGLPVGLNTVFGPSGIVAIPLMTSHSGIFAGMAVFVVGLLISYVVGFLATYFFGSKDVDLS.

The PTS EIIB type-1 domain occupies 1–89 (MAKITQTMIS…NKLIESVING (89 aa)). C28 acts as the Phosphocysteine intermediate; for EIIB activity in catalysis. The region spanning 127–486 (SKFATIFTPL…FFGSKDVDLS (360 aa)) is the PTS EIIC type-1 domain. A run of 10 helical transmembrane segments spans residues 129–149 (FATIFTPLIPGFIAAGLLLGF), 170–190 (LIAYMKVFGKGLFAFLSILIG), 196–216 (AFGGSGVNGAILASLFVLGYN), 230–250 (FFGYTIDPRGNIIGVLLAAII), 268–288 (MILTSVVTLLIMGVITFVVIM), 312–332 (AAILAGLFLISVVFGIHQGFV), 347–367 (LFPILAMAGGGQVGASLALYF), 381–401 (GAIIPGILGIGEPLIYGVTLP), 411–431 (IGGAAGGFFIGLVSYLGLPVG), and 453–473 (IFAGMAVFVVGLLISYVVGFL).

It is found in the cell inner membrane. It catalyses the reaction N-acetyl-beta-D-muramate(out) + N(pros)-phospho-L-histidyl-[protein] = N-acetyl-beta-D-muramate 6-phosphate(in) + L-histidyl-[protein]. The phosphoenolpyruvate-dependent sugar phosphotransferase system (sugar PTS), a major carbohydrate active transport system, catalyzes the phosphorylation of incoming sugar substrates concomitantly with their translocation across the cell membrane. This system is involved in N-acetylmuramic acid (MurNAc) transport, yielding cytoplasmic MurNAc-6-P. Is also able to take up anhydro-N-acetylmuramic acid (anhMurNAc), but cannot phosphorylate the carbon 6, probably because of the 1,6-anhydro ring. This Vibrio vulnificus (strain CMCP6) protein is PTS system N-acetylmuramic acid-specific EIIBC component (murP).